The chain runs to 259 residues: Imidazole glycerol phosphate synthase subunit HisF (259 aa).

Active-site residues include D11 and D130.

The protein belongs to the HisA/HisF family. In terms of assembly, heterodimer of HisH and HisF.

It is found in the cytoplasm. The catalysed reaction is 5-[(5-phospho-1-deoxy-D-ribulos-1-ylimino)methylamino]-1-(5-phospho-beta-D-ribosyl)imidazole-4-carboxamide + L-glutamine = D-erythro-1-(imidazol-4-yl)glycerol 3-phosphate + 5-amino-1-(5-phospho-beta-D-ribosyl)imidazole-4-carboxamide + L-glutamate + H(+). It functions in the pathway amino-acid biosynthesis; L-histidine biosynthesis; L-histidine from 5-phospho-alpha-D-ribose 1-diphosphate: step 5/9. In terms of biological role, IGPS catalyzes the conversion of PRFAR and glutamine to IGP, AICAR and glutamate. The HisF subunit catalyzes the cyclization activity that produces IGP and AICAR from PRFAR using the ammonia provided by the HisH subunit. This chain is Imidazole glycerol phosphate synthase subunit HisF, found in Desulfovibrio desulfuricans (strain ATCC 27774 / DSM 6949 / MB).